We begin with the raw amino-acid sequence, 344 residues long: tRNA N6-adenosine threonylcarbamoyltransferase (344 aa).

Positions 111 and 115 each coordinate Fe cation. Substrate is bound by residues 134 to 138 (LVSGG), Asp-167, Gly-180, and Asn-274. Asp-302 serves as a coordination point for Fe cation.

The protein belongs to the KAE1 / TsaD family. Fe(2+) serves as cofactor.

It localises to the cytoplasm. The catalysed reaction is L-threonylcarbamoyladenylate + adenosine(37) in tRNA = N(6)-L-threonylcarbamoyladenosine(37) in tRNA + AMP + H(+). Functionally, required for the formation of a threonylcarbamoyl group on adenosine at position 37 (t(6)A37) in tRNAs that read codons beginning with adenine. Is involved in the transfer of the threonylcarbamoyl moiety of threonylcarbamoyl-AMP (TC-AMP) to the N6 group of A37, together with TsaE and TsaB. TsaD likely plays a direct catalytic role in this reaction. In Dechloromonas aromatica (strain RCB), this protein is tRNA N6-adenosine threonylcarbamoyltransferase.